Reading from the N-terminus, the 352-residue chain is Photosystem II D2 protein (352 aa).

A helical transmembrane segment spans residues 40–60 (CAYLALGGWLTGTSFVTSWYT). His-117 is a binding site for chlorophyll a. A helical transmembrane segment spans residues 124–140 (GFMLRQFEIARLVGVRP). Pheophytin a is bound by residues Gln-129 and Asn-142. Residues 152–165 (VFVSVFLMYPLGQS) form a helical membrane-spanning segment. His-197 is a binding site for chlorophyll a. Residues 207–227 (GALLCAIHGATVENTLFEDSE) form a helical membrane-spanning segment. A plastoquinone is bound by residues His-214 and Phe-261. His-214 is a binding site for Fe cation. His-268 contributes to the Fe cation binding site. The helical transmembrane segment at 278 to 294 (GLWMSSIGIVGLALNLR) threads the bilayer.

It belongs to the reaction center PufL/M/PsbA/D family. PSII is composed of 1 copy each of membrane proteins PsbA, PsbB, PsbC, PsbD, PsbE, PsbF, PsbH, PsbI, PsbJ, PsbK, PsbL, PsbM, PsbT, PsbX, PsbY, PsbZ, Psb30/Ycf12, peripheral proteins PsbO, CyanoQ (PsbQ), PsbU, PsbV and a large number of cofactors. It forms dimeric complexes. The D1/D2 heterodimer binds P680, chlorophylls that are the primary electron donor of PSII, and subsequent electron acceptors. It shares a non-heme iron and each subunit binds pheophytin, quinone, additional chlorophylls, carotenoids and lipids. There is also a Cl(-1) ion associated with D1 and D2, which is required for oxygen evolution. The PSII complex binds additional chlorophylls, carotenoids and specific lipids. is required as a cofactor.

The protein localises to the cellular thylakoid membrane. It catalyses the reaction 2 a plastoquinone + 4 hnu + 2 H2O = 2 a plastoquinol + O2. Functionally, photosystem II (PSII) is a light-driven water:plastoquinone oxidoreductase that uses light energy to abstract electrons from H(2)O, generating O(2) and a proton gradient subsequently used for ATP formation. It consists of a core antenna complex that captures photons, and an electron transfer chain that converts photonic excitation into a charge separation. The D1/D2 (PsbA/PsbD) reaction center heterodimer binds P680, the primary electron donor of PSII as well as several subsequent electron acceptors. D2 is needed for assembly of a stable PSII complex. This chain is Photosystem II D2 protein, found in Synechococcus elongatus (strain ATCC 33912 / PCC 7942 / FACHB-805) (Anacystis nidulans R2).